The chain runs to 380 residues: Putative glutamate--cysteine ligase 2-2 (380 aa).

Belongs to the glutamate--cysteine ligase type 2 family. YbdK subfamily.

It carries out the reaction L-cysteine + L-glutamate + ATP = gamma-L-glutamyl-L-cysteine + ADP + phosphate + H(+). Functionally, ATP-dependent carboxylate-amine ligase which exhibits weak glutamate--cysteine ligase activity. This is Putative glutamate--cysteine ligase 2-2 from Nocardia farcinica (strain IFM 10152).